The sequence spans 200 residues: ATP synthase subunit s, mitochondrial (200 aa).

A mitochondrion-targeting transit peptide spans 1-25 (MMMFGKISRQLCSLKKIPWSCDSRY). Positions 1–61 (MMMFGKISRQ…SEWLLRCGAK (61 aa)) are N-terminal domain. Mg(2+) is bound at residue Gly-59. LRR repeat units follow at residues 62–87 (VRYC…RYKI), 88–116 (QAID…KITL), 117–141 (CKCH…KSLL), and 142–173 (ELEI…LSDL). Residue Thr-93 participates in Mg(2+) binding.

Belongs to the ATP synthase subunit s family. Homotetramer. Associates with ATP synthase.

The protein localises to the mitochondrion. It localises to the mitochondrion inner membrane. Functionally, involved in regulation of mitochondrial membrane ATP synthase. Necessary for H(+) conduction of ATP synthase. Facilitates energy-driven catalysis of ATP synthesis by blocking a proton leak through an alternative proton exit pathway. This Mus musculus (Mouse) protein is ATP synthase subunit s, mitochondrial (Dmac2l).